The following is a 321-amino-acid chain: Homoserine O-succinyltransferase (321 aa).

Cys-142 acts as the Acyl-thioester intermediate in catalysis. Lys-163 and Ser-192 together coordinate substrate. The active-site Proton acceptor is His-235. Glu-237 is an active-site residue. Arg-249 provides a ligand contact to substrate.

The protein belongs to the MetA family.

The protein localises to the cytoplasm. The enzyme catalyses L-homoserine + succinyl-CoA = O-succinyl-L-homoserine + CoA. It participates in amino-acid biosynthesis; L-methionine biosynthesis via de novo pathway; O-succinyl-L-homoserine from L-homoserine: step 1/1. Transfers a succinyl group from succinyl-CoA to L-homoserine, forming succinyl-L-homoserine. This Shewanella loihica (strain ATCC BAA-1088 / PV-4) protein is Homoserine O-succinyltransferase.